Here is a 398-residue protein sequence, read N- to C-terminus: MYLEQLSLTDFRSYQQADLGLEPGVNVFIGSNGLGKTNLVEALGYLASLSSHRVSQDGPLIRFGAEQALIRGNLVRGTQRLGLEVEINASRANRARINRANPVRAREILGLCRTVLFAPEDLSLVKGDPGNRRRFLDDLLQSLHPRFAGLRADYERVLKQRNALLKSARGHSRSRQAPSADFLSTIEVWDQHFANHAAQLLSARLKVLEQLKPEMSRAYQELTDGSKELSARYRSSLDGYQEDSDDAAEIHDDEAASLVSASVESLTEHYLLALAAVRQREIERGLTLIGPHRDEVELGLGQAPARGYASHGETWSVALALRLASYYVLKADQEIDGADPILVLDDVFAELDSSRRSKLAHMVAGAEQVLVTAAVDDDVPAELSGRRIRVSAIGVVDD.

30-37 is an ATP binding site; the sequence is GSNGLGKT.

Belongs to the RecF family.

The protein resides in the cytoplasm. In terms of biological role, the RecF protein is involved in DNA metabolism; it is required for DNA replication and normal SOS inducibility. RecF binds preferentially to single-stranded, linear DNA. It also seems to bind ATP. This chain is DNA replication and repair protein RecF, found in Renibacterium salmoninarum (strain ATCC 33209 / DSM 20767 / JCM 11484 / NBRC 15589 / NCIMB 2235).